Reading from the N-terminus, the 89-residue chain is Small ribosomal subunit protein uS17 (89 aa).

Belongs to the universal ribosomal protein uS17 family. In terms of assembly, part of the 30S ribosomal subunit.

In terms of biological role, one of the primary rRNA binding proteins, it binds specifically to the 5'-end of 16S ribosomal RNA. The chain is Small ribosomal subunit protein uS17 from Variovorax paradoxus (strain S110).